The chain runs to 230 residues: Acyl-protein thioesterase 1 (230 aa).

Active-site charge relay system residues include S119, D174, and H208. K224 bears the N6-acetyllysine mark.

This sequence belongs to the AB hydrolase superfamily. AB hydrolase 2 family. In terms of assembly, homodimer.

The protein localises to the cytoplasm. It localises to the cell membrane. Its subcellular location is the nucleus membrane. It is found in the endoplasmic reticulum. The enzyme catalyses S-hexadecanoyl-L-cysteinyl-[protein] + H2O = L-cysteinyl-[protein] + hexadecanoate + H(+). It catalyses the reaction 1-hexadecanoyl-sn-glycero-3-phosphocholine + H2O = sn-glycerol 3-phosphocholine + hexadecanoate + H(+). The catalysed reaction is a 1-(9Z-octadecenoyl)-2-acyl-sn-glycero-3-phosphocholine + H2O = a 2-acyl-sn-glycero-3-phosphocholine + (9Z)-octadecenoate + H(+). Its function is as follows. Acts as an acyl-protein thioesterase. Hydrolyzes fatty acids from S-acylated cysteine residues in proteins such as trimeric G alpha proteins or HRAS. Acts as a palmitoyl thioesterase that catalyzes depalmitoylation of proteins, such as ADRB2, KCNMA1 and SQSTM1. Acts as a negative regulator of autophagy by mediating palmitoylation of SQSTM1, decreasing affinity between SQSTM1 and ATG8 proteins and recruitment of ubiquitinated cargo proteins to autophagosomes. Acts as a lysophospholipase and hydrolyzes lysophosphatidylcholine (lyso-PC). Also hydrolyzes lysophosphatidylethanolamine (lyso-PE), lysophosphatidylinositol (lyso-PI) and lysophosphatidylserine (lyso-PS). Has much higher thioesterase activity than lysophospholipase activity. Contributes to the production of lysophosphatidic acid (LPA) during blood coagulation by recognizing and cleaving plasma phospholipids to generate lysophospholipids which in turn act as substrates for ENPP2 to produce LPA. In Pongo abelii (Sumatran orangutan), this protein is Acyl-protein thioesterase 1 (LYPLA1).